A 916-amino-acid chain; its full sequence is Alanine--tRNA ligase (916 aa).

Positions 611, 615, 714, and 718 each coordinate Zn(2+).

The protein belongs to the class-II aminoacyl-tRNA synthetase family. The cofactor is Zn(2+).

Its subcellular location is the cytoplasm. The catalysed reaction is tRNA(Ala) + L-alanine + ATP = L-alanyl-tRNA(Ala) + AMP + diphosphate. Functionally, catalyzes the attachment of alanine to tRNA(Ala) in a two-step reaction: alanine is first activated by ATP to form Ala-AMP and then transferred to the acceptor end of tRNA(Ala). Also edits incorrectly charged Ser-tRNA(Ala) and Gly-tRNA(Ala) via its editing domain. The chain is Alanine--tRNA ligase from Methanospirillum hungatei JF-1 (strain ATCC 27890 / DSM 864 / NBRC 100397 / JF-1).